We begin with the raw amino-acid sequence, 422 residues long: 4-hydroxy-3-methylbut-2-en-1-yl diphosphate synthase (flavodoxin) (422 aa).

Cysteine 316, cysteine 319, cysteine 362, and glutamate 369 together coordinate [4Fe-4S] cluster.

It belongs to the IspG family. [4Fe-4S] cluster is required as a cofactor.

It carries out the reaction (2E)-4-hydroxy-3-methylbut-2-enyl diphosphate + oxidized [flavodoxin] + H2O + 2 H(+) = 2-C-methyl-D-erythritol 2,4-cyclic diphosphate + reduced [flavodoxin]. It participates in isoprenoid biosynthesis; isopentenyl diphosphate biosynthesis via DXP pathway; isopentenyl diphosphate from 1-deoxy-D-xylulose 5-phosphate: step 5/6. Functionally, converts 2C-methyl-D-erythritol 2,4-cyclodiphosphate (ME-2,4cPP) into 1-hydroxy-2-methyl-2-(E)-butenyl 4-diphosphate. This chain is 4-hydroxy-3-methylbut-2-en-1-yl diphosphate synthase (flavodoxin), found in Ehrlichia canis (strain Jake).